Here is a 441-residue protein sequence, read N- to C-terminus: tRNA modification GTPase MnmE (441 aa).

(6S)-5-formyl-5,6,7,8-tetrahydrofolate is bound by residues arginine 21, glutamate 79, and lysine 118. Residues 214-370 (GFKIAIVGKP…LEGYLKTQDT (157 aa)) form the TrmE-type G domain. GTP is bound by residues 224–229 (NVGKSS), 243–249 (SDEAGTT), and 268–271 (DTAG). Positions 228 and 249 each coordinate Mg(2+). Lysine 441 is a binding site for (6S)-5-formyl-5,6,7,8-tetrahydrofolate.

It belongs to the TRAFAC class TrmE-Era-EngA-EngB-Septin-like GTPase superfamily. TrmE GTPase family. In terms of assembly, homodimer. Heterotetramer of two MnmE and two MnmG subunits. It depends on K(+) as a cofactor.

Its subcellular location is the cytoplasm. Functionally, exhibits a very high intrinsic GTPase hydrolysis rate. Involved in the addition of a carboxymethylaminomethyl (cmnm) group at the wobble position (U34) of certain tRNAs, forming tRNA-cmnm(5)s(2)U34. The chain is tRNA modification GTPase MnmE from Campylobacter concisus (strain 13826).